The chain runs to 393 residues: PPE family protein PPE26 (393 aa).

Belongs to the mycobacterial PPE family. In terms of assembly, interacts with human TLR2.

Its function is as follows. Probably plays a key role in regulating innate and adaptive immune responses through human Toll-like receptor 2 (TLR2). Interacts with TLR2, leading to the subsequent activation of the mitogen-activated protein kinase (MAPK) and nuclear factor kappa B (NF-kappa-B) signaling pathways. Stimulates macrophage activation by augmenting pro-inflammatory cytokine production (TNF-alpha, IL-6 and IL-12p40) and the expression of cell surface molecules (CD80, CD86, MHC class I and II). Also participates in adaptive immunity by directing Th1-polarised immune responses. The polypeptide is PPE family protein PPE26 (Mycobacterium tuberculosis (strain ATCC 25618 / H37Rv)).